A 2467-amino-acid polypeptide reads, in one-letter code: Transcription factor TFIIIB component B'' homolog (2467 aa).

Disordered regions lie at residues 1-145 and 159-243; these read MFRR…RYRI and LRKE…VDDG. The segment at 1–301 is interaction with ZBTB43; that stretch reads MFRRARLSVK…TYSSFRKNYY (301 aa). Positions 81–92 are enriched in low complexity; the sequence is AAESSTLSSASS. The span at 99-118 shows a compositional bias: polar residues; the sequence is SSTSSLVQPSGSAPSQSRPL. Basic and acidic residues-rich tracts occupy residues 133-144 and 177-186; these read AKEKQPCSDRYR and RPPDRSKMTM. Residues 144–177 adopt a coiled-coil conformation; sequence RIYKARKLREMLKEELRKEKKQWKNKFSTNESQR. A compositionally biased stretch (acidic residues) spans 231–242; sequence NDNEDVEEEVDD. The 51-residue stretch at 297–347 folds into the Myb-like domain; it reads RKNYYSKPWSNKETDMFFLAISMVGTDFSMIGQLFPHRARIEIKNKFKREE. Residues 357 to 472 are required for phosphorylation by CSNK2A1; the sequence is AFQEKRPFDF…QEKKRRRNQG (116 aa). 16 disordered regions span residues 380–513, 576–720, 748–844, 866–893, 971–1200, 1231–1270, 1318–1388, 1409–1448, 1527–1561, 1592–1706, 1902–1926, 1977–2014, 2058–2083, 2179–2206, 2260–2290, and 2304–2449; these read EEKR…ECNK, SADM…VKAA, PPQT…PATW, LTAT…NAEM, LQEN…SSKI, LGRH…VKPA, DSDQ…LVPI, LPVR…PELQ, KAKP…EDHL, IHSE…RASK, IVSK…LPTR, IQRE…QCVG, LDSG…SDVP, LVVQ…DLTS, GIFP…SGSL, and LPQS…EEVT. A coiled-coil region spans residues 458–487; that stretch reads EQDQNQEKKRRRNQGEANKQEATNLLERVL. Over residues 649–660 the composition is skewed to basic and acidic residues; the sequence is AAEKNHMEKETM. Basic residues predominate over residues 809–824; it reads RFQKPKPNTGRRRRRI. 6 stretches are compositionally biased toward basic and acidic residues: residues 873 to 884, 992 to 1002, 1009 to 1041, 1089 to 1098, 1112 to 1130, and 1150 to 1170; these read KDSESDVKDSGR, TGKDLAMKEST, TEER…RGEM, EGKELNLRET, EKTD…ERES, and DLGK…EEHS. Polar residues-rich tracts occupy residues 1180–1200, 1251–1265, 1318–1330, and 1364–1382; these read LSSS…SSKI, DTNL…QQPL, DSDQ…QHNV, and PPNS…NQEN. 3 stretches are compositionally biased toward basic and acidic residues: residues 1429–1448, 1536–1561, and 1592–1603; these read QIVE…PELQ, RRKD…EDHL, and IHSEESGSDRND. Composition is skewed to polar residues over residues 1621–1642 and 1650–1665; these read EQPT…SSCP and YPKT…SSAS. Over residues 1688–1697 the composition is skewed to basic residues; sequence RGSKRIRGKT. 3 stretches are compositionally biased toward basic and acidic residues: residues 1902 to 1913, 1977 to 1996, and 2068 to 2078; these read IVSKEQSNRDAA, IQRE…DKSH, and AAKEALKETPK. The span at 2185–2199 shows a compositional bias: low complexity; that stretch reads PSLSPSRSGSSEKPP. 3 stretches are compositionally biased toward polar residues: residues 2262–2273, 2319–2334, and 2414–2429; these read FPTSESTHATSK, PASN…SSSK, and TAGS…SSDQ.

Component of TFIIIB complex. The TFIIIB complex has two activities, alpha and beta. The TFIIIB-alpha and TFIIIB-beta activities are required for transcription of genes with TFIIIC-bound internal promoters and PSE transcription factor-bound external promoters, respectively. The TFIIIB-alpha activity complex is composed of TBP, BDP1, and a complex containing both BRF2 and at least four stably associated proteins; YY1 facilitates the formation of TFIIIB-alpha activity complex. The TFIIIB-beta activity complex is composed of TBP, BDP1, and BRF1. Interacts with BRF1; this interaction diminishes during mitosis resulting in the release of BDP1 from chromosomal templates. Component of TFIIIC complex. The TFIIIC complex has two activities, C1 and C2. The TFIIIC2 activity complex is only required for transcription of the 'classical' pol III genes whereas the TFIIIC1 activity complex is required for transcription of all pol III genes. The TFIIIC1 activity complex is composed at least of BDP1. Interacts with ZBTB43. Post-translationally, phosphorylated by CSNK2A1 during mitosis, resulting in its release from chromatin and suppression of polymerase III transcription. Expressed in the cochlea, particularly in the spiral ligament, the capillaries of the stria vascularis and the basilar membrane.

It is found in the nucleus. Functionally, general activator of RNA polymerase III transcription. Requires for transcription from all three types of polymerase III promoters. Requires for transcription of genes with internal promoter elements and with promoter elements upstream of the initiation site. The sequence is that of Transcription factor TFIIIB component B'' homolog (Bdp1) from Mus musculus (Mouse).